We begin with the raw amino-acid sequence, 215 residues long: MEVVILNENGDSVGNLEIVDEIFKSEVNNNLLYEAIKNELANRRQGTHSTKTRAEVSGGGKKPWRQKGTGRARAGSTRSPIWVGGGKTHTPKPRDYSYRLPKKMKRKALLSVLSLKYGSNVLKVFEDFTFDAPKTKRMASFISKVKEPNTRKVAFVVGKDESLGDNYNKLLLSLRNIKDLKLVNADSMSIHPLFYADEVYFTKTALSKLNARIKG.

The interval 43 to 97 (RRQGTHSTKTRAEVSGGGKKPWRQKGTGRARAGSTRSPIWVGGGKTHTPKPRDYS) is disordered.

The protein belongs to the universal ribosomal protein uL4 family. Part of the 50S ribosomal subunit.

In terms of biological role, one of the primary rRNA binding proteins, this protein initially binds near the 5'-end of the 23S rRNA. It is important during the early stages of 50S assembly. It makes multiple contacts with different domains of the 23S rRNA in the assembled 50S subunit and ribosome. Forms part of the polypeptide exit tunnel. The sequence is that of Large ribosomal subunit protein uL4 from Brachyspira hyodysenteriae (strain ATCC 49526 / WA1).